A 292-amino-acid polypeptide reads, in one-letter code: Imipenem-hydrolyzing beta-lactamase (292 aa).

The signal sequence occupies residues 1–27; sequence MSLNVKQSRIAILFSSCLISISFFSQA. Cysteine 70 and cysteine 240 are joined by a disulfide. Serine 71 (acyl-ester intermediate) is an active-site residue. Residue 236–238 participates in substrate binding; it reads KTG.

Belongs to the class-A beta-lactamase family.

It catalyses the reaction a beta-lactam + H2O = a substituted beta-amino acid. Functionally, hydrolyzes carbapenems such as imipenem, which are extended-spectrum beta-lactam antibiotics. This is Imipenem-hydrolyzing beta-lactamase (nmcA) from Enterobacter cloacae.